The following is a 213-amino-acid chain: MKSYQRQFIEFALSKQVLKFGEFTLKSGRKSPYFFNAGLFNTGRDLALLGRFYAEALVDSGIEFDLLFGPAYKGIPIATTTAVALAEHHDLDLPYCFNRKEAKDHGEGGNLVGSALQGRVMLVDDVITAGTAIRESMEIIQANGATLAGVLISLDRQERGRGEISAIQEVERDYNCKVISIITLKDLIAYLEEKPEMAEHLAAVKAYREEFGV.

Lys26 is a 5-phospho-alpha-D-ribose 1-diphosphate binding site. 34 to 35 (FF) provides a ligand contact to orotate. 5-phospho-alpha-D-ribose 1-diphosphate is bound by residues 72–73 (YK), Arg99, Lys100, Lys103, His105, and 124–132 (DDVITAGTA). Residues Thr128 and Arg156 each coordinate orotate.

This sequence belongs to the purine/pyrimidine phosphoribosyltransferase family. PyrE subfamily. In terms of assembly, homodimer. The cofactor is Mg(2+).

The catalysed reaction is orotidine 5'-phosphate + diphosphate = orotate + 5-phospho-alpha-D-ribose 1-diphosphate. The protein operates within pyrimidine metabolism; UMP biosynthesis via de novo pathway; UMP from orotate: step 1/2. Functionally, catalyzes the transfer of a ribosyl phosphate group from 5-phosphoribose 1-diphosphate to orotate, leading to the formation of orotidine monophosphate (OMP). This Shigella flexneri protein is Orotate phosphoribosyltransferase.